The following is a 378-amino-acid chain: tRNA-specific 2-thiouridylase MnmA (378 aa).

ATP is bound by residues 7-14 and methionine 33; that span reads GLSGGVDS. The interval 102–104 is interaction with target base in tRNA; sequence NPD. The active-site Nucleophile is the cysteine 107. Cysteine 107 and cysteine 209 are joined by a disulfide. Glycine 132 serves as a coordination point for ATP. Residues 159–161 form an interaction with tRNA region; that stretch reads KDQ. The Cysteine persulfide intermediate role is filled by cysteine 209. Positions 316–317 are interaction with tRNA; the sequence is RY.

It belongs to the MnmA/TRMU family.

The protein localises to the cytoplasm. It catalyses the reaction S-sulfanyl-L-cysteinyl-[protein] + uridine(34) in tRNA + AH2 + ATP = 2-thiouridine(34) in tRNA + L-cysteinyl-[protein] + A + AMP + diphosphate + H(+). Functionally, catalyzes the 2-thiolation of uridine at the wobble position (U34) of tRNA, leading to the formation of s(2)U34. The chain is tRNA-specific 2-thiouridylase MnmA from Onion yellows phytoplasma (strain OY-M).